The following is a 346-amino-acid chain: tRNA N6-adenosine threonylcarbamoyltransferase (346 aa).

Positions 111 and 115 each coordinate Fe cation. Substrate is bound by residues Leu-134–Gly-138, Asp-167, Gly-180, and Asn-279. Asp-307 is a binding site for Fe cation.

It belongs to the KAE1 / TsaD family. Requires Fe(2+) as cofactor.

The protein localises to the cytoplasm. The catalysed reaction is L-threonylcarbamoyladenylate + adenosine(37) in tRNA = N(6)-L-threonylcarbamoyladenosine(37) in tRNA + AMP + H(+). Functionally, required for the formation of a threonylcarbamoyl group on adenosine at position 37 (t(6)A37) in tRNAs that read codons beginning with adenine. Is involved in the transfer of the threonylcarbamoyl moiety of threonylcarbamoyl-AMP (TC-AMP) to the N6 group of A37, together with TsaE and TsaB. TsaD likely plays a direct catalytic role in this reaction. The polypeptide is tRNA N6-adenosine threonylcarbamoyltransferase (Burkholderia vietnamiensis (strain G4 / LMG 22486) (Burkholderia cepacia (strain R1808))).